Here is a 547-residue protein sequence, read N- to C-terminus: DNA mismatch repair protein MutL (547 aa).

Belongs to the DNA mismatch repair MutL/HexB family.

This protein is involved in the repair of mismatches in DNA. It is required for dam-dependent methyl-directed DNA mismatch repair. May act as a 'molecular matchmaker', a protein that promotes the formation of a stable complex between two or more DNA-binding proteins in an ATP-dependent manner without itself being part of a final effector complex. This Deinococcus radiodurans (strain ATCC 13939 / DSM 20539 / JCM 16871 / CCUG 27074 / LMG 4051 / NBRC 15346 / NCIMB 9279 / VKM B-1422 / R1) protein is DNA mismatch repair protein MutL.